The following is a 240-amino-acid chain: Enolase-phosphatase E1 (240 aa).

It belongs to the HAD-like hydrolase superfamily. MasA/MtnC family. Monomer. Mg(2+) is required as a cofactor.

It catalyses the reaction 5-methylsulfanyl-2,3-dioxopentyl phosphate + H2O = 1,2-dihydroxy-5-(methylsulfanyl)pent-1-en-3-one + phosphate. The protein operates within amino-acid biosynthesis; L-methionine biosynthesis via salvage pathway; L-methionine from S-methyl-5-thio-alpha-D-ribose 1-phosphate: step 3/6. Its pathway is amino-acid biosynthesis; L-methionine biosynthesis via salvage pathway; L-methionine from S-methyl-5-thio-alpha-D-ribose 1-phosphate: step 4/6. Bifunctional enzyme that catalyzes the enolization of 2,3-diketo-5-methylthiopentyl-1-phosphate (DK-MTP-1-P) into the intermediate 2-hydroxy-3-keto-5-methylthiopentenyl-1-phosphate (HK-MTPenyl-1-P), which is then dephosphorylated to form the acireductone 1,2-dihydroxy-3-keto-5-methylthiopentene (DHK-MTPene). In Saccharopolyspora erythraea (strain ATCC 11635 / DSM 40517 / JCM 4748 / NBRC 13426 / NCIMB 8594 / NRRL 2338), this protein is Enolase-phosphatase E1.